A 92-amino-acid chain; its full sequence is Small ribosomal subunit protein uS19 (92 aa).

It belongs to the universal ribosomal protein uS19 family.

Functionally, protein S19 forms a complex with S13 that binds strongly to the 16S ribosomal RNA. This Anoxybacillus flavithermus (strain DSM 21510 / WK1) protein is Small ribosomal subunit protein uS19.